The sequence spans 329 residues: MPITRMRMRPWLEMQINSNQIPGLIWINKEEMIFQIPWKHAAKHGWDINKDACLFRSWAIHTGRYKAGEKEPDPKTWKANFRCAMNSLPDIEEVKDQSRNKGSSAVRVYRMLPPLTRNQRKERKSKSSRDTKSKTKRKLCGDVSPDTFSDGLSSSTLPDDHSSYTTQGYLGQDLDMERDITPALSPCVVSSSLSEWHMQMDIIPDSTTDLYNLQVSPMPSTSEAATDEDEEGKIAEDLMKLFEQSEWQPTHIDGKGYLLNEPGTQLSSVYGDFSCKEEPEIDSPRGDIGIGIQHVFTEMKNMDSIMWMDSLLGNSVRLPPSIQAIPCAP.

Residues R5–P113 constitute a DNA-binding region (IRF tryptophan pentad repeat). The residue at position 78 (K78) is an N6-acetyllysine. The tract at residues E93–T166 is disordered. The segment covering D146–T166 has biased composition (polar residues). Residues K276 and K300 each participate in a glycyl lysine isopeptide (Lys-Gly) (interchain with G-Cter in SUMO) cross-link.

Belongs to the IRF family. As to quaternary structure, monomer. Homodimer. Interacts with EP300. Interacts with MYD88. Interacts with PIAS3. Interacts with SPOP. In terms of processing, phosphorylated by CK2 and this positively regulates its activity. Post-translationally, ubiquitinated in a SPOP-depedent manner. Sumoylation represses the transcriptional activity and displays enhanced resistance to protein degradation. Sumoylated by UBE2I/UBC9 and SUMO1. Inactivates the tumor suppressor activity. Elevated levels in tumor cells. Major site is Lys-276. Sumoylation is enhanced by PIAS3. Desumoylated by SENP1 in tumor cells and appears to compete with ubiquitination on C-terminal sites. Ubiquitinated. Appears to compete with sumoylation on C-terminal sites.

The protein resides in the nucleus. It localises to the cytoplasm. With respect to regulation, activated by MYD88. Transcriptional regulator which displays a remarkable functional diversity in the regulation of cellular responses. Regulates transcription of IFN and IFN-inducible genes, host response to viral and bacterial infections, regulation of many genes expressed during hematopoiesis, inflammation, immune responses and cell proliferation and differentiation, regulation of the cell cycle and induction of growth arrest and programmed cell death following DNA damage. Stimulates both innate and acquired immune responses through the activation of specific target genes and can act as a transcriptional activator and repressor regulating target genes by binding to an interferon-stimulated response element (ISRE) in their promoters. Has an essentail role in IFNG-dependent immunity to mycobacteria. Binds to a consensus sequence in gene promoters. Its target genes for transcriptional activation activity are: genes involved in anti-viral response, such as IFN-alpha/beta, RIGI, TNFSF10/TRAIL, ZBP1, OAS1/2, PIAS1/GBP, EIF2AK2/PKR and RSAD2/viperin; antibacterial response, such as GBP2, GBP5, IRGB10 and NOS2/INOS; anti-proliferative response, such as p53/TP53, LOX and CDKN1A; apoptosis, such as BBC3/PUMA, CASP1, CASP7 and CASP8; immune response, such as IL7, IL12A/B and IL15, PTGS2/COX2 and CYBB; DNA damage responses and DNA repair, such as POLQ/POLH; MHC class I expression, such as TAP1, PSMB9/LMP2, PSME1/PA28A, PSME2/PA28B and B2M and MHC class II expression, such as CIITA; metabolic enzymes, such as ACOD1/IRG1. Represses genes involved in anti-proliferative response, such as BIRC5/survivin, CCNB1, CCNE1, CDK1, CDK2 and CDK4 and in immune response, such as FOXP3, IL4, ANXA2 and TLR4. Stimulates p53/TP53-dependent transcription through enhanced recruitment of EP300 leading to increased acetylation of p53/TP53. Plays an important role in immune response directly affecting NK maturation and activity, macrophage production of IL12, Th1 development and maturation of CD8+ T-cells. Also implicated in the differentiation and maturation of dendritic cells and in the suppression of regulatory T (Treg) cells development. Acts as a tumor suppressor and plays a role not only in antagonism of tumor cell growth but also in stimulating an immune response against tumor cells. In Mus musculus (Mouse), this protein is Interferon regulatory factor 1 (Irf1).